The primary structure comprises 402 residues: O-glucosyltransferase rumi homolog (402 aa).

The signal sequence occupies residues 1-20; the sequence is MPYLEIVLALLVLSFQLGHS. 4 disulfide bridges follow: Cys-67–Cys-74, Cys-72–Cys-375, Cys-118–Cys-124, and Cys-279–Cys-302. N-linked (GlcNAc...) asparagine glycosylation occurs at Asn-71. Asp-149 (proton donor/acceptor) is an active-site residue. The interaction with the consensus sequence C-X-S-X-[PA]-C in peptide substrates stretch occupies residues 189-194; it reads AISLYP. Residues 226-230, Arg-234, 273-275, and 291-295 contribute to the UDP-alpha-D-glucose site; these read RGSRT, VRL, and AASFR.

The protein belongs to the glycosyltransferase 90 family.

It is found in the endoplasmic reticulum lumen. The protein localises to the secreted. Its pathway is protein modification; protein glycosylation. Its function is as follows. Protein O-glucosyltransferase. Catalyzes the reaction that attaches glucose through an O-glycosidic linkage to a conserved serine residue found in the consensus sequence C-X-S-X-[PA]-C in epidermal growth factor-like repeats. Regulates Notch signaling by glucosylating Notch in the ER, glucosylation is required for the correct folding and cleavage of Notch. This is O-glucosyltransferase rumi homolog from Aedes aegypti (Yellowfever mosquito).